We begin with the raw amino-acid sequence, 95 residues long: Protein TusB (95 aa).

This sequence belongs to the DsrH/TusB family. As to quaternary structure, heterohexamer, formed by a dimer of trimers. The hexameric TusBCD complex contains 2 copies each of TusB, TusC and TusD. The TusBCD complex interacts with TusE.

It is found in the cytoplasm. Functionally, part of a sulfur-relay system required for 2-thiolation of 5-methylaminomethyl-2-thiouridine (mnm(5)s(2)U) at tRNA wobble positions. The protein is Protein TusB of Yersinia enterocolitica serotype O:8 / biotype 1B (strain NCTC 13174 / 8081).